The primary structure comprises 285 residues: V-set and transmembrane domain-containing protein 2B (285 aa).

The first 28 residues, 1 to 28, serve as a signal peptide directing secretion; sequence MEQRNRLGALGYLPPLLLHALLLFVADA. The Ig-like V-type domain maps to 29 to 143; that stretch reads AFTEVPKDVT…DDDTQEHKAQ (115 aa). At 29–263 the chain is on the extracellular side; it reads AFTEVPKDVT…HGSGTGRSYT (235 aa). A disulfide bond links C49 and C127. The tract at residues 161-226 is disordered; it reads EAVSHIQSSG…EAAAASAAHT (66 aa). Composition is skewed to low complexity over residues 177-189 and 208-226; these read ASAA…GAAS and PAAI…AAHT. A helical transmembrane segment spans residues 264-284; sequence TDPLLSLLLLALHKFLRLLLG. A topological domain (cytoplasmic) is located at residue H285.

The protein resides in the membrane. The chain is V-set and transmembrane domain-containing protein 2B (VSTM2B) from Homo sapiens (Human).